We begin with the raw amino-acid sequence, 380 residues long: Queuine tRNA-ribosyltransferase (380 aa).

The active-site Proton acceptor is aspartate 96. Residues 96 to 100 (DSGGF), aspartate 150, glutamine 193, and glycine 220 contribute to the substrate site. An RNA binding region spans residues 251-257 (GVGAPDS). Aspartate 270 functions as the Nucleophile in the catalytic mechanism. The tract at residues 275-279 (TRIAR) is RNA binding; important for wobble base 34 recognition. Residues cysteine 308, cysteine 310, cysteine 313, and histidine 339 each contribute to the Zn(2+) site.

This sequence belongs to the queuine tRNA-ribosyltransferase family. In terms of assembly, homodimer. Within each dimer, one monomer is responsible for RNA recognition and catalysis, while the other monomer binds to the replacement base PreQ1. Zn(2+) serves as cofactor.

It carries out the reaction 7-aminomethyl-7-carbaguanine + guanosine(34) in tRNA = 7-aminomethyl-7-carbaguanosine(34) in tRNA + guanine. It functions in the pathway tRNA modification; tRNA-queuosine biosynthesis. Catalyzes the base-exchange of a guanine (G) residue with the queuine precursor 7-aminomethyl-7-deazaguanine (PreQ1) at position 34 (anticodon wobble position) in tRNAs with GU(N) anticodons (tRNA-Asp, -Asn, -His and -Tyr). Catalysis occurs through a double-displacement mechanism. The nucleophile active site attacks the C1' of nucleotide 34 to detach the guanine base from the RNA, forming a covalent enzyme-RNA intermediate. The proton acceptor active site deprotonates the incoming PreQ1, allowing a nucleophilic attack on the C1' of the ribose to form the product. After dissociation, two additional enzymatic reactions on the tRNA convert PreQ1 to queuine (Q), resulting in the hypermodified nucleoside queuosine (7-(((4,5-cis-dihydroxy-2-cyclopenten-1-yl)amino)methyl)-7-deazaguanosine). The polypeptide is Queuine tRNA-ribosyltransferase (Streptococcus equi subsp. zooepidemicus (strain H70)).